Consider the following 288-residue polypeptide: Lysosomal thioesterase PPT2-B (288 aa).

Positions 1–20 (MRGYLLLLPLLLCLVDNSVS) are cleaved as a signal peptide. Cysteines 95 and 103 form a disulfide. Catalysis depends on serine 97, which acts as the Nucleophile. Asparagine 143 carries an N-linked (GlcNAc...) asparagine glycan. Cysteine 151 and cysteine 162 are disulfide-bonded. A glycan (N-linked (GlcNAc...) asparagine) is linked at asparagine 192. Catalysis depends on residues aspartate 214 and histidine 269. Asparagine 275 is a glycosylation site (N-linked (GlcNAc...) asparagine).

The protein belongs to the palmitoyl-protein thioesterase family.

It localises to the lysosome. The catalysed reaction is hexadecanoyl-CoA + H2O = hexadecanoate + CoA + H(+). It carries out the reaction S-hexadecanoyl-N-acetylcysteamine + H2O = N-acetylcysteamine + hexadecanoate + H(+). Catalyzes the cleavage of thioester bonds from S-palmitoyl-CoA or S-palmitoyl-N-acetylcysteamine (unbranched structures) but does not have activity against palmitoylcysteine or palmitoylated proteins, branched structures or bulky head groups. Conversely, hydrolyzes both long and short chain fatty acyl-CoA substrate. This Xenopus laevis (African clawed frog) protein is Lysosomal thioesterase PPT2-B (ppt2-b).